We begin with the raw amino-acid sequence, 270 residues long: Putative pyruvate, phosphate dikinase regulatory protein (270 aa).

Residue 148–155 coordinates ADP; sequence GVSRTSKT.

Belongs to the pyruvate, phosphate/water dikinase regulatory protein family. PDRP subfamily.

It catalyses the reaction N(tele)-phospho-L-histidyl/L-threonyl-[pyruvate, phosphate dikinase] + ADP = N(tele)-phospho-L-histidyl/O-phospho-L-threonyl-[pyruvate, phosphate dikinase] + AMP + H(+). The catalysed reaction is N(tele)-phospho-L-histidyl/O-phospho-L-threonyl-[pyruvate, phosphate dikinase] + phosphate + H(+) = N(tele)-phospho-L-histidyl/L-threonyl-[pyruvate, phosphate dikinase] + diphosphate. Functionally, bifunctional serine/threonine kinase and phosphorylase involved in the regulation of the pyruvate, phosphate dikinase (PPDK) by catalyzing its phosphorylation/dephosphorylation. The chain is Putative pyruvate, phosphate dikinase regulatory protein from Bacillus cereus (strain B4264).